We begin with the raw amino-acid sequence, 139 residues long: Proline-rich protein 13 (139 aa).

Positions 1-139 (MWNPSAGPNP…SSSSSSSDSD (139 aa)) are disordered. 2 stretches are compositionally biased toward pro residues: residues 24-62 (ACPP…PQPG) and 70-91 (GPYP…PPAP). Basic residues predominate over residues 103–124 (KTRKKMKKAHKKSHKHHKHGKH). Residues 125-139 (SSSSSSSSSSSSDSD) are compositionally biased toward low complexity.

It is found in the nucleus. Functionally, negatively regulates TSP1 expression at the level of transcription. This down-regulation was shown to reduce taxane-induced apoptosis. This chain is Proline-rich protein 13 (Prr13), found in Rattus norvegicus (Rat).